The sequence spans 118 residues: Basic phospholipase A2 homolog 1 (118 aa).

Disulfide bonds link C11–C71, C27–C117, C29–C45, C44–C98, C51–C91, C60–C84, and C78–C89. The interval 106-118 (NKNFNIDTKKRCK) is important for membrane-damaging activities in eukaryotes and bacteria; heparin-binding.

The protein belongs to the phospholipase A2 family. Group I subfamily. D49 sub-subfamily. As to expression, expressed by the venom gland.

It is found in the secreted. This Laticauda colubrina (Yellow-lipped sea krait) protein is Basic phospholipase A2 homolog 1.